The primary structure comprises 291 residues: Small ribosomal subunit biogenesis GTPase RsgA (291 aa).

The region spanning 63–221 is the CP-type G domain; sequence ENELKRPPVS…IADTPGFSAL (159 aa). Residues 112-115 and 164-172 contribute to the GTP site; these read TKKD and GQSGVGKST. Zn(2+)-binding residues include cysteine 245, cysteine 250, histidine 252, and cysteine 258.

This sequence belongs to the TRAFAC class YlqF/YawG GTPase family. RsgA subfamily. Monomer. Associates with 30S ribosomal subunit, binds 16S rRNA. It depends on Zn(2+) as a cofactor.

The protein resides in the cytoplasm. Its function is as follows. One of several proteins that assist in the late maturation steps of the functional core of the 30S ribosomal subunit. Helps release RbfA from mature subunits. May play a role in the assembly of ribosomal proteins into the subunit. Circularly permuted GTPase that catalyzes slow GTP hydrolysis, GTPase activity is stimulated by the 30S ribosomal subunit. The chain is Small ribosomal subunit biogenesis GTPase RsgA from Staphylococcus aureus (strain COL).